Reading from the N-terminus, the 240-residue chain is T4 protein (240 aa).

The protein belongs to the poxviruses B9 family.

The polypeptide is T4 protein (Sheeppox virus (strain InS-1) (SPPV)).